We begin with the raw amino-acid sequence, 122 residues long: Large ribosomal subunit protein uL14 (122 aa).

Belongs to the universal ribosomal protein uL14 family. In terms of assembly, part of the 50S ribosomal subunit. Forms a cluster with proteins L3 and L19. In the 70S ribosome, L14 and L19 interact and together make contacts with the 16S rRNA in bridges B5 and B8.

In terms of biological role, binds to 23S rRNA. Forms part of two intersubunit bridges in the 70S ribosome. The polypeptide is Large ribosomal subunit protein uL14 (Mycobacterium marinum (strain ATCC BAA-535 / M)).